A 154-amino-acid chain; its full sequence is Aspartate carbamoyltransferase regulatory chain (154 aa).

Residues C109, C114, C138, and C141 each coordinate Zn(2+).

Belongs to the PyrI family. As to quaternary structure, contains catalytic and regulatory chains. The cofactor is Zn(2+).

Functionally, involved in allosteric regulation of aspartate carbamoyltransferase. This Photobacterium profundum (strain SS9) protein is Aspartate carbamoyltransferase regulatory chain.